The following is a 495-amino-acid chain: Lysine--tRNA ligase (495 aa).

E406 and E413 together coordinate Mg(2+).

This sequence belongs to the class-II aminoacyl-tRNA synthetase family. As to quaternary structure, homodimer. Mg(2+) is required as a cofactor.

Its subcellular location is the cytoplasm. It carries out the reaction tRNA(Lys) + L-lysine + ATP = L-lysyl-tRNA(Lys) + AMP + diphosphate. The polypeptide is Lysine--tRNA ligase (Staphylococcus aureus (strain MRSA252)).